Here is a 337-residue protein sequence, read N- to C-terminus: tRNA N6-adenosine threonylcarbamoyltransferase (337 aa).

Residues H111 and H115 each contribute to the Fe cation site. Substrate is bound by residues 134–138, D167, G180, and N272; that span reads LVSGG. D300 serves as a coordination point for Fe cation.

It belongs to the KAE1 / TsaD family. It depends on Fe(2+) as a cofactor.

It localises to the cytoplasm. The catalysed reaction is L-threonylcarbamoyladenylate + adenosine(37) in tRNA = N(6)-L-threonylcarbamoyladenosine(37) in tRNA + AMP + H(+). In terms of biological role, required for the formation of a threonylcarbamoyl group on adenosine at position 37 (t(6)A37) in tRNAs that read codons beginning with adenine. Is involved in the transfer of the threonylcarbamoyl moiety of threonylcarbamoyl-AMP (TC-AMP) to the N6 group of A37, together with TsaE and TsaB. TsaD likely plays a direct catalytic role in this reaction. This chain is tRNA N6-adenosine threonylcarbamoyltransferase, found in Shewanella woodyi (strain ATCC 51908 / MS32).